The sequence spans 491 residues: Argininosuccinate lyase (491 aa).

It belongs to the lyase 1 family. Argininosuccinate lyase subfamily.

The protein resides in the cytoplasm. The catalysed reaction is 2-(N(omega)-L-arginino)succinate = fumarate + L-arginine. Its pathway is amino-acid biosynthesis; L-arginine biosynthesis; L-arginine from L-ornithine and carbamoyl phosphate: step 3/3. The chain is Argininosuccinate lyase from Methanosarcina acetivorans (strain ATCC 35395 / DSM 2834 / JCM 12185 / C2A).